A 126-amino-acid chain; its full sequence is Histone H2B type 1-N (126 aa).

Over residues 1 to 12 (MPEPSKSAPAPK) the composition is skewed to low complexity. Residues 1-36 (MPEPSKSAPAPKKGSKKAVTKAQKKDGKKRKRSRKE) form a disordered region. Position 2 is an N-acetylproline (proline 2). At glutamate 3 the chain carries ADP-ribosyl glutamic acid. Residue lysine 6 is modified to N6-(2-hydroxyisobutyryl)lysine; alternate. Lysine 6 is subject to N6-(beta-hydroxybutyryl)lysine; alternate. Lysine 6 carries the post-translational modification N6-acetyllysine; alternate. Lysine 6 carries the N6-butyryllysine; alternate modification. Residue lysine 6 is modified to N6-crotonyllysine; alternate. Lysine 6 carries the post-translational modification N6-lactoyllysine; alternate. A Glycyl lysine isopeptide (Lys-Gly) (interchain with G-Cter in SUMO2); alternate cross-link involves residue lysine 6. Serine 7 carries the post-translational modification ADP-ribosylserine. Lysine 12 bears the N6-(beta-hydroxybutyryl)lysine; alternate mark. N6-acetyllysine; alternate is present on residues lysine 12 and lysine 13. Residues lysine 12 and lysine 13 each carry the N6-crotonyllysine; alternate modification. Lysine 12 bears the N6-lactoyllysine; alternate mark. Lysine 13 carries the N6-(2-hydroxyisobutyryl)lysine; alternate modification. Serine 15 is modified (phosphoserine; by STK4/MST1). Lysine 16, lysine 17, lysine 21, and lysine 24 each carry N6-acetyllysine; alternate. N6-crotonyllysine; alternate occurs at positions 16, 17, 21, and 24. Residues lysine 16, lysine 17, lysine 21, and lysine 24 each carry the N6-lactoyllysine; alternate modification. Lysine 17 bears the N6-glutaryllysine; alternate mark. N6-(2-hydroxyisobutyryl)lysine; alternate is present on residues lysine 21 and lysine 24. At lysine 21 the chain carries N6-(beta-hydroxybutyryl)lysine; alternate. Lysine 21 carries the N6-butyryllysine; alternate modification. Lysine 21 participates in a covalent cross-link: Glycyl lysine isopeptide (Lys-Gly) (interchain with G-Cter in SUMO2); alternate. Residue lysine 25 is modified to N6-(2-hydroxyisobutyryl)lysine. Lysine 35 is subject to N6-(2-hydroxyisobutyryl)lysine; alternate. The residue at position 35 (lysine 35) is an N6-(beta-hydroxybutyryl)lysine; alternate. Lysine 35 is subject to N6-crotonyllysine; alternate. Position 35 is an N6-glutaryllysine; alternate (lysine 35). Position 35 is an N6-succinyllysine; alternate (lysine 35). Residue lysine 35 forms a Glycyl lysine isopeptide (Lys-Gly) (interchain with G-Cter in ubiquitin); alternate linkage. Residue glutamate 36 is modified to PolyADP-ribosyl glutamic acid. A Phosphoserine; by AMPK modification is found at serine 37. Lysine 44, lysine 47, and lysine 58 each carry N6-(2-hydroxyisobutyryl)lysine; alternate. An N6-lactoyllysine; alternate modification is found at lysine 44. An N6-glutaryllysine; alternate mark is found at lysine 44 and lysine 47. Residue lysine 47 is modified to N6-methyllysine; alternate. The residue at position 58 (lysine 58) is an N6,N6-dimethyllysine; alternate. The residue at position 80 (arginine 80) is a Dimethylated arginine. Lysine 86 is subject to N6-(2-hydroxyisobutyryl)lysine; alternate. Residue lysine 86 is modified to N6-acetyllysine; alternate. Lysine 86 carries the N6-lactoyllysine; alternate modification. Lysine 86 is modified (N6,N6,N6-trimethyllysine; alternate). An omega-N-methylarginine mark is found at arginine 87 and arginine 93. Lysine 109 is modified (N6-(2-hydroxyisobutyryl)lysine; alternate). At lysine 109 the chain carries N6-lactoyllysine; alternate. Lysine 109 is modified (N6-glutaryllysine; alternate). At lysine 109 the chain carries N6-methyllysine; alternate. The O-linked (GlcNAc) serine glycan is linked to serine 113. Position 116 is a phosphothreonine (threonine 116). Lysine 117 and lysine 121 each carry N6-(2-hydroxyisobutyryl)lysine; alternate. Lysine 117 carries the post-translational modification N6-(beta-hydroxybutyryl)lysine; alternate. Residues lysine 117 and lysine 121 each carry the N6-lactoyllysine; alternate modification. An N6-glutaryllysine; alternate mark is found at lysine 117 and lysine 121. An N6-succinyllysine; alternate mark is found at lysine 117 and lysine 121. Lysine 117 is subject to N6-methylated lysine; alternate. A Glycyl lysine isopeptide (Lys-Gly) (interchain with G-Cter in ubiquitin); alternate cross-link involves residue lysine 121.

It belongs to the histone H2B family. As to quaternary structure, the nucleosome is a histone octamer containing two molecules each of H2A, H2B, H3 and H4 assembled in one H3-H4 heterotetramer and two H2A-H2B heterodimers. The octamer wraps approximately 147 bp of DNA. Post-translationally, monoubiquitination at Lys-35 (H2BK34Ub) by the MSL1/MSL2 dimer is required for histone H3 'Lys-4' (H3K4me) and 'Lys-79' (H3K79me) methylation and transcription activation at specific gene loci, such as HOXA9 and MEIS1 loci. Similarly, monoubiquitination at Lys-121 (H2BK120Ub) by the RNF20/40 complex gives a specific tag for epigenetic transcriptional activation and is also prerequisite for histone H3 'Lys-4' and 'Lys-79' methylation. It also functions cooperatively with the FACT dimer to stimulate elongation by RNA polymerase II. H2BK120Ub also acts as a regulator of mRNA splicing: deubiquitination by USP49 is required for efficient cotranscriptional splicing of a large set of exons. Phosphorylated on Ser-15 (H2BS14ph) by STK4/MST1 during apoptosis; which facilitates apoptotic chromatin condensation. Also phosphorylated on Ser-15 in response to DNA double strand breaks (DSBs), and in correlation with somatic hypermutation and immunoglobulin class-switch recombination. Phosphorylation at Ser-37 (H2BS36ph) by AMPK in response to stress promotes transcription. In terms of processing, glcNAcylation at Ser-113 promotes monoubiquitination of Lys-121. It fluctuates in response to extracellular glucose, and associates with transcribed genes. Post-translationally, ADP-ribosylated by PARP1 or PARP2 on Ser-7 (H2BS6ADPr) in response to DNA damage. H2BS6ADPr promotes recruitment of CHD1L. Mono-ADP-ribosylated on Glu-3 (H2BE2ADPr) by PARP3 in response to single-strand breaks. Poly ADP-ribosylation on Glu-36 (H2BE35ADPr) by PARP1 regulates adipogenesis: it inhibits phosphorylation at Ser-37 (H2BS36ph), thereby blocking expression of pro-adipogenetic genes. Crotonylation (Kcr) is specifically present in male germ cells and marks testis-specific genes in post-meiotic cells, including X-linked genes that escape sex chromosome inactivation in haploid cells. Crotonylation marks active promoters and enhancers and confers resistance to transcriptional repressors. It is also associated with post-meiotically activated genes on autosomes. In terms of processing, lactylated in macrophages by EP300/P300 by using lactoyl-CoA directly derived from endogenous or exogenous lactate, leading to stimulates gene transcription.

It is found in the nucleus. The protein localises to the chromosome. Its function is as follows. Core component of nucleosome. Nucleosomes wrap and compact DNA into chromatin, limiting DNA accessibility to the cellular machineries which require DNA as a template. Histones thereby play a central role in transcription regulation, DNA repair, DNA replication and chromosomal stability. DNA accessibility is regulated via a complex set of post-translational modifications of histones, also called histone code, and nucleosome remodeling. The polypeptide is Histone H2B type 1-N (H2BC15) (Bos taurus (Bovine)).